A 1553-amino-acid chain; its full sequence is MDLEQDEWMSQRQRQQQMEFSRIGIEVIGSKKDLIVNSMKNHETTLTIINETYRIVYYDQYESKFTSCNIITFDGKDKRSIKKMKRVVQKLSNESTNSSHQFDLHSHALLQSSSSSSSSSTSSSPSLTSSPSSPISTSPPYHSSPQLLEHLLHQQQPITSVGSKPSFFVIINLYNDDRQSYMSEIVSFAGSFQFIEWRNDESWKEVFKLSSNLLTYHVKKNELARACTLGDINLLDEIILSGCSKSQLKEAQGAGYTIVFNSYTSYSSGSSLVVSGTMALLCAIVENGTFLLLSKSNITRFPMSIINMCSQLVELDMSNNRITEIPIEITELKFLKNLNLSDNLINDIPLEICNLTLLKVLLLNENPLNNFPSSIVELGTKKLLSFCRNILEGKSCETWNKVKLMFVGEEGVGKTRLCKLLIGSKYNKKKSSSSSSSSLSSLSSALSSSSSSSSIINSNSISNSNINMVNIKNENQVTGDTVSTEGVNIHDFKSKKVEFYAWDFGGQQIFYPTHQFFLTTQSLYLLIFRVNDSNFAERVNYWVHQIKAKSGISLPIIFFVGTHIDSCTPEQLSMAESILKSNFIKYSRVKQNVINFVSCVTGKGVKELKKRLIHESEKSRLIKKDIPGSYIILEQRLSNRGANQGRMSISNSASNSSSSLLNSSSSSSPSLTSKKSSSHLKHSQQQQQQHQQQQQQLQQSIKEKYIDYDDYLNECKLSYLKPHEIKDATDFLHNLGIILHFDSPKLNNLVVLDPQWLADVMSSLITFSHSWIKLGILNHSDLQSIWGGRYKQTLWPSLLKLLEKFEVSYQLPNLSKSLIPSLLPDDPIGEILEIKDREWVPLKLAMENNYVQVFGCDYHFSFMPLGFFARLLLRILLIQGIDIKTYWKDGVLLDILTPSDKIKQQQLLQKKSIFEPTTTLSPFLCSLSLTDSQNYSPLEPPPLILNSPRVNRKFISNSTSTTSTTTSTTSTSTTSSNNITPLSMSSITPYSPTSPRTPSFSSSSTTTSSSSSSSSPSSQFCGVGCHRNINKNNGSSNELIKTLTKINNQNGSSGELIKTTTTTSTSTSTTSTTTPTTTTPTIPIKNNNNKKLPINRTVSSLCLTAKPKLQALITFIKKKSFEQSHDNDSYKLNIQVRTYNTTIDKEHSVSLFFQQLLFTIDTLISGSYQGLEVTRTIPCTHCIQLNPTIEPYHFDLGDCISALEDGRSHVYCGNDPNTPVRIDYIAPDICLKKVPTFTDDQILYERQIGEGGFGLIHKGKLISNKSDIAIKSLILCNSNNNNNSNNNNNSNNSNNFKNNNNEDEFIEKFQEFQHEVFIMSNLNHPNIVKLYGLMHNPPRMVMEYVEHGDLYHLCQDKERYASLGWTLKLRLMIDIAKGIGYMQNQNPPIVHRDLRSPNIFLKSLDENSPVCAKIADFGLSQQSVYSVSGLLGNFQWMAPETIGVEDESYTEKVDTYSFAMILFTILTGEIPFDEYSFGKMQFINLIREENLRPTLPFDCDPRLSNLIQLCWSTNPKKRPSFTFIIKELLEIRIDSIQTSYFDSPFLKNYPASI.

Residues 113 to 142 (SSSSSSSSTSSSPSLTSSPSSPISTSPPYH) form a disordered region. LRR repeat units follow at residues 287 to 309 (NGTF…INMC), 311 to 333 (QLVE…TELK), 334 to 356 (FLKN…CNLT), and 357 to 378 (LLKV…IVEL). Residues 395 to 619 (SCETWNKVKL…KRLIHESEKS (225 aa)) enclose the Roc domain. Disordered stretches follow at residues 643 to 696 (NQGR…QQQQ), 955 to 1019 (ISNS…PSSQ), and 1048 to 1090 (NQNG…NNNK). Composition is skewed to low complexity over residues 648–675 (SISN…TSKK), 683–696 (SQQQ…QQQQ), 956–1018 (SNST…SPSS), and 1059–1090 (TTTT…NNNK). The COR domain occupies 694–893 (QQQLQQSIKE…KTYWKDGVLL (200 aa)). Residues 1242–1546 (ILYERQIGEG…QTSYFDSPFL (305 aa)) enclose the Protein kinase domain. ATP is bound by residues 1248–1256 (IGEGGFGLI) and Lys1271. Asp1393 acts as the Proton acceptor in catalysis.

Belongs to the protein kinase superfamily. TKL Ser/Thr protein kinase family. ROCO subfamily.

It catalyses the reaction L-seryl-[protein] + ATP = O-phospho-L-seryl-[protein] + ADP + H(+). The enzyme catalyses L-threonyl-[protein] + ATP = O-phospho-L-threonyl-[protein] + ADP + H(+). In terms of biological role, involved in growth, and during development, in aggregation. This chain is Probable serine/threonine-protein kinase qkgA (qkgA-1), found in Dictyostelium discoideum (Social amoeba).